Reading from the N-terminus, the 217-residue chain is CD99 antigen-like protein 2 (217 aa).

A signal peptide spans 1 to 25 (MVAWRWACLICLAFSLTTLVQRGSG). Topologically, residues 26-141 (DTGGFRLEDA…DDSGMSAETG (116 aa)) are extracellular. A disordered region spans residues 36–136 (VEGTSSVKQR…GGDNSDDSGM (101 aa)). The span at 50 to 64 (TTTTRRPGATRAPAK) shows a compositional bias: low complexity. The segment covering 70–82 (AEDDFNLADALDD) has biased composition (acidic residues). The segment covering 83-92 (QNDRDHDRKK) has biased composition (basic and acidic residues). A glycan (O-linked (Xyl...) (chondroitin sulfate) serine) is linked at Ser134. The helical transmembrane segment at 142-162 (TIAGVASALAMALIGAVSSYI) threads the bilayer. At 163–217 (SYQQKKFCFSIQQGLNADYVKGENLEAVVCEEPQVKYSALQTQSTEPPPPEPPRI) the chain is on the cytoplasmic side.

The protein belongs to the CD99 family. In terms of processing, O-glycosylated.

Its subcellular location is the cell membrane. It localises to the cell junction. The protein localises to the secreted. Plays a role in a late step of leukocyte extravasation helping cells to overcome the endothelial basement membrane. Acts at the same site as, but independently of, PECAM1. Homophilic adhesion molecule, but these interactions may not be required for cell aggregation. The sequence is that of CD99 antigen-like protein 2 (CD99L2) from Bos taurus (Bovine).